A 342-amino-acid polypeptide reads, in one-letter code: Peroxisomal membrane protein import receptor PEX19 (342 aa).

The segment covering 1-18 (MNENEYDNFDDLDDLLDE) has biased composition (acidic residues). 2 disordered regions span residues 1–68 (MNEN…DPEL) and 119–141 (CSSL…GFKN). The segment covering 41 to 54 (SENKEKNAESKDSD) has biased composition (basic and acidic residues). Position 62 is a phosphoserine (S62). S304 bears the Phosphoserine mark. The disordered stretch occupies residues 321-342 (IDGNDPNLGNLDKELTDGCKQQ). The span at 331–342 (LDKELTDGCKQQ) shows a compositional bias: basic and acidic residues. The residue at position 339 (C339) is a Cysteine methyl ester. A lipid anchor (S-farnesyl cysteine) is attached at C339. Positions 340–342 (KQQ) are cleaved as a propeptide — removed in mature form.

Belongs to the peroxin-19 family. In terms of assembly, interacts (farnesylated) with PEX3; farnesylation is required for this interaction. Interacts with PEX2, PEX5, PEX10, PEX11, PEX12, PEX13, PEX14, PEX17, PEX22, PEX25, PEX30 and PEX32; the interaction requires well-defined PEX19-binding sites within the peroxisomal membrane protein targeting signal (mPTS) of the PMPs and is independent on the presence of PEX3. Interacts with VPS1.

The protein resides in the cytoplasm. The protein localises to the peroxisome membrane. Its subcellular location is the endoplasmic reticulum membrane. In terms of biological role, required for proper post-translational import and stabilization of peroxisomal membrane proteins (PMPs). Acts as a cytosolic import receptor for PMPs and delivers them to the docking factor PEX3 at the peroxisomal membrane for subsequent insertion into the membrane. Acts as a chaperone in stabilizing or maintaining PMPs in the lipid bilayer. Directs PEX17, a peripheral component of the peroxisomal matrix protein translocation machinery, to peroxisomes. Stabilizes VPS1, a protein required for peroxisomal fission, at the peroxisomal membrane. Also acts in conjunction with PEX3 in the formation of peroxisomes from preperoxisomal compartments at the endoplasmic reticulum during de novo peroxisome synthesis, probably via the import of additional PMPs. This is Peroxisomal membrane protein import receptor PEX19 (PEX19) from Saccharomyces cerevisiae (strain ATCC 204508 / S288c) (Baker's yeast).